Reading from the N-terminus, the 256-residue chain is Large ribosomal subunit protein eL8A (256 aa).

A disordered region spans residues 1 to 37 (MAPGKKVAPAPFGAKSTKSNKTRNPLTHSTPKNFGIG). The segment covering 16 to 32 (STKSNKTRNPLTHSTPK) has biased composition (polar residues).

It belongs to the eukaryotic ribosomal protein eL8 family. In terms of assembly, component of the large ribosomal subunit (LSU). Mature yeast ribosomes consist of a small (40S) and a large (60S) subunit. The 40S small subunit contains 1 molecule of ribosomal RNA (18S rRNA) and 33 different proteins (encoded by 57 genes). The large 60S subunit contains 3 rRNA molecules (25S, 5.8S and 5S rRNA) and 46 different proteins (encoded by 81 genes).

Its subcellular location is the cytoplasm. In terms of biological role, component of the ribosome, a large ribonucleoprotein complex responsible for the synthesis of proteins in the cell. The small ribosomal subunit (SSU) binds messenger RNAs (mRNAs) and translates the encoded message by selecting cognate aminoacyl-transfer RNA (tRNA) molecules. The large subunit (LSU) contains the ribosomal catalytic site termed the peptidyl transferase center (PTC), which catalyzes the formation of peptide bonds, thereby polymerizing the amino acids delivered by tRNAs into a polypeptide chain. The nascent polypeptides leave the ribosome through a tunnel in the LSU and interact with protein factors that function in enzymatic processing, targeting, and the membrane insertion of nascent chains at the exit of the ribosomal tunnel. This chain is Large ribosomal subunit protein eL8A, found in Saccharomyces cerevisiae (strain ATCC 204508 / S288c) (Baker's yeast).